The chain runs to 132 residues: uncharacterized protein (132 aa).

A disordered region spans residues 17-75; that stretch reads RSAVPRWPHLSSQSGVEPPDRWTGTPGWPSRDQEAPGSMMPPAAAQPSAHGALVPPATA. Over residues 51–65 the composition is skewed to low complexity; sequence APGSMMPPAAAQPSA.

Expressed exclusively in heart.

It is found in the cytoplasm. This is an uncharacterized protein from Homo sapiens (Human).